The sequence spans 548 residues: Chaperonin GroEL (548 aa).

Residues 30–33 (TLGP), K51, 87–91 (DGTTT), G415, 479–481 (NAA), and D495 each bind ATP.

Belongs to the chaperonin (HSP60) family. Forms a cylinder of 14 subunits composed of two heptameric rings stacked back-to-back. Interacts with the co-chaperonin GroES. In terms of processing, UMPylated on a tyrosine residue by YdiU under ATP-limited conditions.

It is found in the cytoplasm. The enzyme catalyses ATP + H2O + a folded polypeptide = ADP + phosphate + an unfolded polypeptide.. With respect to regulation, UMPylation of the chaperone by YdiU negatively regulates its activity, facilitating Salmonella survival under ATP-limited conditions. In terms of biological role, together with its co-chaperonin GroES, plays an essential role in assisting protein folding. The GroEL-GroES system forms a nano-cage that allows encapsulation of the non-native substrate proteins and provides a physical environment optimized to promote and accelerate protein folding. The sequence is that of Chaperonin GroEL from Salmonella typhimurium (strain LT2 / SGSC1412 / ATCC 700720).